The primary structure comprises 125 residues: Large ribosomal subunit protein bL12 (125 aa).

The protein belongs to the bacterial ribosomal protein bL12 family. As to quaternary structure, homodimer. Part of the ribosomal stalk of the 50S ribosomal subunit. Forms a multimeric L10(L12)X complex, where L10 forms an elongated spine to which 2 to 4 L12 dimers bind in a sequential fashion. Binds GTP-bound translation factors.

In terms of biological role, forms part of the ribosomal stalk which helps the ribosome interact with GTP-bound translation factors. Is thus essential for accurate translation. The sequence is that of Large ribosomal subunit protein bL12 from Anaeromyxobacter sp. (strain Fw109-5).